A 166-amino-acid chain; its full sequence is Putative 4-hydroxy-4-methyl-2-oxoglutarate aldolase (166 aa).

Substrate-binding positions include Gly74 to Ile77 and Arg96. Position 97 (Asp97) interacts with a divalent metal cation.

Belongs to the class II aldolase/RraA-like family. Homotrimer. A divalent metal cation serves as cofactor.

The enzyme catalyses 4-hydroxy-4-methyl-2-oxoglutarate = 2 pyruvate. It carries out the reaction oxaloacetate + H(+) = pyruvate + CO2. Functionally, catalyzes the aldol cleavage of 4-hydroxy-4-methyl-2-oxoglutarate (HMG) into 2 molecules of pyruvate. Also contains a secondary oxaloacetate (OAA) decarboxylase activity due to the common pyruvate enolate transition state formed following C-C bond cleavage in the retro-aldol and decarboxylation reactions. The polypeptide is Putative 4-hydroxy-4-methyl-2-oxoglutarate aldolase (Xanthomonas campestris pv. campestris (strain 8004)).